A 134-amino-acid polypeptide reads, in one-letter code: Probable glycine cleavage system H protein (134 aa).

Residues 29 to 110 (TVLVGITDYA…PYGAWIAKIK (82 aa)) form the Lipoyl-binding domain. At Lys70 the chain carries N6-lipoyllysine.

Belongs to the GcvH family. As to quaternary structure, the glycine cleavage system is composed of four proteins: P, T, L and H. (R)-lipoate serves as cofactor.

Its function is as follows. The glycine cleavage system catalyzes the degradation of glycine. The H protein shuttles the methylamine group of glycine from the P protein to the T protein. The polypeptide is Probable glycine cleavage system H protein (Pyrococcus horikoshii (strain ATCC 700860 / DSM 12428 / JCM 9974 / NBRC 100139 / OT-3)).